Consider the following 91-residue polypeptide: Small ribosomal subunit protein uS19c (91 aa).

This sequence belongs to the universal ribosomal protein uS19 family.

The protein localises to the plastid. It is found in the organellar chromatophore. Functionally, protein S19 forms a complex with S13 that binds strongly to the 16S ribosomal RNA. This Paulinella chromatophora protein is Small ribosomal subunit protein uS19c.